The chain runs to 482 residues: MTASTEAAVVVLAAGAGTRMRSDTPKVLHTLAGRGMLAHVLHTVSEIDARHLVAVLGHDRERIAPEVARLSEELGRAIDVAVQDQQLGTGHAVNCGLTALPHDFAGMVVVTSGDVPLLDTATLTGLITSHGSGDAAATVLTTTLPDPTGYGRILRTQDHEIIGIVEQADATESQRTICEVNTGVYAFDIADLRSALTRLRSDNAQHELYLTDVVEILRQDHRTVRALHVDDSALVTGVNDRVQLSDLGKVLNRRIVAAHQRAGVTIIDPGSTWIDIDVQIGQDTVVHPGTQLLGATRVGSHCVIGPDTTLTHVTVGDGASVVRTHGSESVIGAGATVGPFTYLRPGTNLGADGKLGAFVETKNCTIGTGTKVPHLTYVGDADIGEYSNIGASSVFVNYDGENKSRTTIGSHVRTGSDTMFVAPVTVGDGAYTGAGTVLRDDVPPGALAVSAGPQRNIEGWVAKKRPGSAADKAARKALGDES.

Residues 1 to 241 are pyrophosphorylase; the sequence is MTASTEAAVV…SALVTGVNDR (241 aa). UDP-N-acetyl-alpha-D-glucosamine contacts are provided by residues 12–15, K26, Q83, 88–89, 112–114, G151, E166, N181, and N239; these read LAAG, GT, and SGD. D114 lines the Mg(2+) pocket. Residue N239 coordinates Mg(2+). A linker region spans residues 242–262; it reads VQLSDLGKVLNRRIVAAHQRA. The segment at 263 to 482 is N-acetyltransferase; it reads GVTIIDPGST…AARKALGDES (220 aa). UDP-N-acetyl-alpha-D-glucosamine contacts are provided by R344 and K362. Catalysis depends on H374, which acts as the Proton acceptor. Residues Y377 and N388 each coordinate UDP-N-acetyl-alpha-D-glucosamine. Acetyl-CoA-binding positions include A391, 397-398, S416, and A434; that span reads NY. The disordered stretch occupies residues 463 to 482; the sequence is KKRPGSAADKAARKALGDES. A compositionally biased stretch (basic and acidic residues) spans 472-482; sequence KAARKALGDES.

The protein in the N-terminal section; belongs to the N-acetylglucosamine-1-phosphate uridyltransferase family. In the C-terminal section; belongs to the transferase hexapeptide repeat family. As to quaternary structure, homotrimer. It depends on Mg(2+) as a cofactor.

It is found in the cytoplasm. It carries out the reaction alpha-D-glucosamine 1-phosphate + acetyl-CoA = N-acetyl-alpha-D-glucosamine 1-phosphate + CoA + H(+). It catalyses the reaction N-acetyl-alpha-D-glucosamine 1-phosphate + UTP + H(+) = UDP-N-acetyl-alpha-D-glucosamine + diphosphate. The protein operates within nucleotide-sugar biosynthesis; UDP-N-acetyl-alpha-D-glucosamine biosynthesis; N-acetyl-alpha-D-glucosamine 1-phosphate from alpha-D-glucosamine 6-phosphate (route II): step 2/2. Its pathway is nucleotide-sugar biosynthesis; UDP-N-acetyl-alpha-D-glucosamine biosynthesis; UDP-N-acetyl-alpha-D-glucosamine from N-acetyl-alpha-D-glucosamine 1-phosphate: step 1/1. It functions in the pathway bacterial outer membrane biogenesis; LPS lipid A biosynthesis. Functionally, catalyzes the last two sequential reactions in the de novo biosynthetic pathway for UDP-N-acetylglucosamine (UDP-GlcNAc). The C-terminal domain catalyzes the transfer of acetyl group from acetyl coenzyme A to glucosamine-1-phosphate (GlcN-1-P) to produce N-acetylglucosamine-1-phosphate (GlcNAc-1-P), which is converted into UDP-GlcNAc by the transfer of uridine 5-monophosphate (from uridine 5-triphosphate), a reaction catalyzed by the N-terminal domain. This chain is Bifunctional protein GlmU, found in Mycolicibacterium smegmatis (strain ATCC 700084 / mc(2)155) (Mycobacterium smegmatis).